Consider the following 220-residue polypeptide: Small ribosomal subunit protein uS3 (220 aa).

In terms of domain architecture, KH type-2 spans 38–106 (IRKYVKGRLK…RVHININEIK (69 aa)).

This sequence belongs to the universal ribosomal protein uS3 family. As to quaternary structure, part of the 30S ribosomal subunit. Forms a tight complex with proteins S10 and S14.

In terms of biological role, binds the lower part of the 30S subunit head. Binds mRNA in the 70S ribosome, positioning it for translation. The polypeptide is Small ribosomal subunit protein uS3 (Brevibacillus brevis (strain 47 / JCM 6285 / NBRC 100599)).